Reading from the N-terminus, the 89-residue chain is Large ribosomal subunit protein bL27 (89 aa).

Positions 1–22 (MAHKKGTGSTRNGRDSNAQRLG) are disordered. Over residues 7–19 (TGSTRNGRDSNAQ) the composition is skewed to polar residues.

This sequence belongs to the bacterial ribosomal protein bL27 family.

The sequence is that of Large ribosomal subunit protein bL27 from Cyanothece sp. (strain PCC 7425 / ATCC 29141).